Reading from the N-terminus, the 430-residue chain is Histidinol dehydrogenase (430 aa).

Positions 237, 259, and 262 each coordinate substrate. Residues Gln259 and His262 each coordinate Zn(2+). Active-site proton acceptor residues include Glu327 and His328. His328, Asp361, Glu415, and His420 together coordinate substrate. Asp361 is a binding site for Zn(2+). Residue His420 participates in Zn(2+) binding.

Belongs to the histidinol dehydrogenase family. Zn(2+) is required as a cofactor.

It carries out the reaction L-histidinol + 2 NAD(+) + H2O = L-histidine + 2 NADH + 3 H(+). The protein operates within amino-acid biosynthesis; L-histidine biosynthesis; L-histidine from 5-phospho-alpha-D-ribose 1-diphosphate: step 9/9. Its function is as follows. Catalyzes the sequential NAD-dependent oxidations of L-histidinol to L-histidinaldehyde and then to L-histidine. The chain is Histidinol dehydrogenase from Sulfurimonas denitrificans (strain ATCC 33889 / DSM 1251) (Thiomicrospira denitrificans (strain ATCC 33889 / DSM 1251)).